Here is an 87-residue protein sequence, read N- to C-terminus: Protein anon-73B1 (87 aa).

Residues 25-47 (LLIRYGLYVGALFQFVCISAAVL) traverse the membrane as a helical segment. A disordered region spans residues 51–87 (NPDGQSNPESGEVTEREGEPVRTRLHKIRKLEKKKRR). The segment covering 63–72 (VTEREGEPVR) has biased composition (basic and acidic residues). The span at 73 to 87 (TRLHKIRKLEKKKRR) shows a compositional bias: basic residues.

This sequence belongs to the UPF0239 family.

It is found in the membrane. The chain is Protein anon-73B1 (anon-73B1) from Drosophila melanogaster (Fruit fly).